The chain runs to 367 residues: Mitogen-activated protein kinase 12 (367 aa).

The Protein kinase domain occupies 27 to 311; sequence YQDLQPVGSG…AAEALAHPYF (285 aa). ATP contacts are provided by residues 33–41 and Lys-56; that span reads VGSGAYGAV. The active-site Proton acceptor is Asp-153. Thr-183 is modified (phosphothreonine; by MAP2K3 and MAP2K6). A TXY motif is present at residues 183–185; the sequence is TGY. Tyr-185 is modified (phosphotyrosine; by MAP2K3 and MAP2K6).

Belongs to the protein kinase superfamily. CMGC Ser/Thr protein kinase family. MAP kinase subfamily. In terms of assembly, monomer. Interacts with the PDZ domain of the syntrophin SNTA1. Interacts with LIN7C, SCRIB, SYNJ2BP and SH3BP5. Interacts with PTPN4; this interaction induces the activation of PTPN4 phosphatase activity. Requires Mg(2+) as cofactor. In terms of processing, dually phosphorylated on Thr-183 and Tyr-185 by MAP2K3/MKK3 and MAP2K6/MKK6, which activates the enzyme. Post-translationally, ubiquitinated. Ubiquitination leads to degradation by the proteasome pathway. Highly expressed in skeletal muscle, lung and testes and also in the heart and thymus of both adult and neonatal rats.

The protein resides in the cytoplasm. It localises to the nucleus. Its subcellular location is the mitochondrion. The enzyme catalyses L-seryl-[protein] + ATP = O-phospho-L-seryl-[protein] + ADP + H(+). The catalysed reaction is L-threonyl-[protein] + ATP = O-phospho-L-threonyl-[protein] + ADP + H(+). With respect to regulation, activated by phosphorylation on threonine and tyrosine. MAP2K3/MKK3 and MAP2K6/MKK6 are both essential for the activation of MAPK12 induced by environmental stress, whereas MAP2K6/MKK6 is the major MAPK12 activator in response to TNF-alpha. In terms of biological role, serine/threonine kinase which acts as an essential component of the MAP kinase signal transduction pathway. MAPK12 is one of the four p38 MAPKs which play an important role in the cascades of cellular responses evoked by extracellular stimuli such as pro-inflammatory cytokines or physical stress leading to direct activation of transcription factors such as ELK1 and ATF2. Accordingly, p38 MAPKs phosphorylate a broad range of proteins and it has been estimated that they may have approximately 200 to 300 substrates each. Some of the targets are downstream kinases such as MAPKAPK2, which are activated through phosphorylation and further phosphorylate additional targets. Plays a role in myoblast differentiation and also in the down-regulation of cyclin D1 in response to hypoxia in adrenal cells suggesting MAPK12 may inhibit cell proliferation while promoting differentiation. Phosphorylates DLG1. Following osmotic shock, MAPK12 in the cell nucleus increases its association with nuclear DLG1, thereby causing dissociation of DLG1-SFPQ complexes. This function is independent of its catalytic activity and could affect mRNA processing and/or gene transcription to aid cell adaptation to osmolarity changes in the environment. Regulates UV-induced checkpoint signaling and repair of UV-induced DNA damage and G2 arrest after gamma-radiation exposure. MAPK12 is involved in the regulation of SLC2A1 expression and basal glucose uptake in L6 myotubes; and negatively regulates SLC2A4 expression and contraction-mediated glucose uptake in adult skeletal muscle. C-Jun (JUN) phosphorylation is stimulated by MAPK14 and inhibited by MAPK12, leading to a distinct AP-1 regulation. MAPK12 is required for the normal kinetochore localization of PLK1, prevents chromosomal instability and supports mitotic cell viability. MAPK12-signaling is also positively regulating the expansion of transient amplifying myogenic precursor cells during muscle growth and regeneration. This is Mitogen-activated protein kinase 12 (Mapk12) from Rattus norvegicus (Rat).